Consider the following 899-residue polypeptide: Alanine--tRNA ligase, chloroplastic/mitochondrial (899 aa).

Residues histidine 581, histidine 585, cysteine 683, and histidine 687 each contribute to the Zn(2+) site.

Belongs to the class-II aminoacyl-tRNA synthetase family. As to quaternary structure, monomer. Zn(2+) serves as cofactor.

It is found in the plastid. The protein resides in the chloroplast. The protein localises to the mitochondrion. The catalysed reaction is tRNA(Ala) + L-alanine + ATP = L-alanyl-tRNA(Ala) + AMP + diphosphate. Functionally, catalyzes the attachment of alanine to tRNA(Ala) in a two-step reaction: alanine is first activated by ATP to form Ala-AMP and then transferred to the acceptor end of tRNA(Ala). Also edits incorrectly charged tRNA(Ala) via its editing domain. The chain is Alanine--tRNA ligase, chloroplastic/mitochondrial from Micromonas pusilla (strain CCMP1545) (Picoplanktonic green alga).